The primary structure comprises 495 residues: Adenosylhomocysteinase (495 aa).

3 residues coordinate substrate: threonine 71, aspartate 156, and glutamate 218. 219 to 221 (TTT) contributes to the NAD(+) binding site. Positions 248 and 252 each coordinate substrate. Residues asparagine 253, 282–287 (GYGDVG), glutamate 305, asparagine 340, 361–363 (IGH), and asparagine 409 contribute to the NAD(+) site.

It belongs to the adenosylhomocysteinase family. Requires NAD(+) as cofactor.

It is found in the cytoplasm. It carries out the reaction S-adenosyl-L-homocysteine + H2O = L-homocysteine + adenosine. It functions in the pathway amino-acid biosynthesis; L-homocysteine biosynthesis; L-homocysteine from S-adenosyl-L-homocysteine: step 1/1. May play a key role in the regulation of the intracellular concentration of adenosylhomocysteine. The chain is Adenosylhomocysteinase from Mycobacterium tuberculosis (strain ATCC 25177 / H37Ra).